A 337-amino-acid chain; its full sequence is tRNA N6-adenosine threonylcarbamoyltransferase (337 aa).

Residues histidine 111 and histidine 115 each coordinate Fe cation. Substrate contacts are provided by residues 134-138 (LVSGG), aspartate 167, glycine 180, and asparagine 272. Aspartate 300 is a Fe cation binding site.

The protein belongs to the KAE1 / TsaD family. Fe(2+) is required as a cofactor.

It is found in the cytoplasm. It catalyses the reaction L-threonylcarbamoyladenylate + adenosine(37) in tRNA = N(6)-L-threonylcarbamoyladenosine(37) in tRNA + AMP + H(+). In terms of biological role, required for the formation of a threonylcarbamoyl group on adenosine at position 37 (t(6)A37) in tRNAs that read codons beginning with adenine. Is involved in the transfer of the threonylcarbamoyl moiety of threonylcarbamoyl-AMP (TC-AMP) to the N6 group of A37, together with TsaE and TsaB. TsaD likely plays a direct catalytic role in this reaction. This is tRNA N6-adenosine threonylcarbamoyltransferase from Aeromonas salmonicida (strain A449).